Consider the following 291-residue polypeptide: Putative GATA transcription factor 13 (291 aa).

The GATA-type zinc-finger motif lies at 187–241 (KSRRLKCTHCETTTTPQWREGPNGRKTLCNACGIRFRSGRLVLEYRPAASPTFIP). The tract at residues 271–291 (TSGPETRSRLRNFGRPMSYGQ) is disordered.

Belongs to the type IV zinc-finger family. Class A subfamily.

The protein resides in the nucleus. Transcriptional activator that specifically binds 5'-GATA-3' or 5'-GAT-3' motifs within gene promoters. May be involved in the regulation of some light-responsive genes. This is Putative GATA transcription factor 13 (GATA13) from Arabidopsis thaliana (Mouse-ear cress).